A 319-amino-acid chain; its full sequence is Succinoglycan biosynthesis protein ExoW (319 aa).

It belongs to the glycosyltransferase 2 family.

It localises to the cell membrane. It participates in glycan metabolism; exopolysaccharide biosynthesis. Its function is as follows. Glycosyltransferase required for the synthesis of succinoglycan (EPS I). Needed for the addition of the seventh sugar (glucose), catalyzes the formation of a beta-1,3 linkage between the seventh and eighth sugar. The protein is Succinoglycan biosynthesis protein ExoW (exoW) of Rhizobium meliloti (strain 1021) (Ensifer meliloti).